The chain runs to 167 residues: Ureidoglycolate lyase (167 aa).

It belongs to the ureidoglycolate lyase family. Homodimer. Ni(2+) is required as a cofactor.

The enzyme catalyses (S)-ureidoglycolate = urea + glyoxylate. The protein operates within nitrogen metabolism; (S)-allantoin degradation. Its function is as follows. Catalyzes the catabolism of the allantoin degradation intermediate (S)-ureidoglycolate, generating urea and glyoxylate. Involved in the utilization of allantoin as nitrogen source. The polypeptide is Ureidoglycolate lyase (Pseudomonas fluorescens (strain Pf0-1)).